Here is a 193-residue protein sequence, read N- to C-terminus: Holliday junction branch migration complex subunit RuvA (193 aa).

Residues 1 to 63 (MYAYLKGKIM…EDAQLLYGFK (63 aa)) form a domain I region. Positions 64–141 (DEEEKAMFNA…TITDESELFK (78 aa)) are domain II. Positions 141 to 142 (KE) are flexible linker. Residues 143–193 (VNDTLLNEALLAFEALGYSKREITKIEKELKKKQFSTVDEYVKQGLQMFVS) are domain III.

It belongs to the RuvA family. In terms of assembly, homotetramer. Forms an RuvA(8)-RuvB(12)-Holliday junction (HJ) complex. HJ DNA is sandwiched between 2 RuvA tetramers; dsDNA enters through RuvA and exits via RuvB. An RuvB hexamer assembles on each DNA strand where it exits the tetramer. Each RuvB hexamer is contacted by two RuvA subunits (via domain III) on 2 adjacent RuvB subunits; this complex drives branch migration. In the full resolvosome a probable DNA-RuvA(4)-RuvB(12)-RuvC(2) complex forms which resolves the HJ.

It is found in the cytoplasm. In terms of biological role, the RuvA-RuvB-RuvC complex processes Holliday junction (HJ) DNA during genetic recombination and DNA repair, while the RuvA-RuvB complex plays an important role in the rescue of blocked DNA replication forks via replication fork reversal (RFR). RuvA specifically binds to HJ cruciform DNA, conferring on it an open structure. The RuvB hexamer acts as an ATP-dependent pump, pulling dsDNA into and through the RuvAB complex. HJ branch migration allows RuvC to scan DNA until it finds its consensus sequence, where it cleaves and resolves the cruciform DNA. The sequence is that of Holliday junction branch migration complex subunit RuvA from Macrococcus caseolyticus (strain JCSC5402) (Macrococcoides caseolyticum).